The following is a 76-amino-acid chain: U1-cyrtautoxin-As1b (76 aa).

4 cysteine pairs are disulfide-bonded: cysteine 23/cysteine 37, cysteine 30/cysteine 51, cysteine 36/cysteine 66, and cysteine 69/cysteine 76.

This sequence belongs to the neurotoxin 21 family. As to expression, expressed by the venom gland.

The protein localises to the secreted. In terms of biological role, neurotoxin with probable ion channel impairing activity. Is both paralytic and lethal, when injected into lepidopteran larvae. In Apomastus schlingeri (Trap-door spider), this protein is U1-cyrtautoxin-As1b.